The following is a 193-amino-acid chain: Putative nitroreductase HBN1 (193 aa).

N-acetylserine is present on Ser2.

Belongs to the nitroreductase family. The cofactor is FMN.

It localises to the cytoplasm. It is found in the nucleus. In Saccharomyces cerevisiae (strain ATCC 204508 / S288c) (Baker's yeast), this protein is Putative nitroreductase HBN1 (HBN1).